Consider the following 355-residue polypeptide: WD repeat domain phosphoinositide-interacting protein 4 (355 aa).

WD repeat units lie at residues 2-40 (SQQRGVNGLRFNQDQSCFCCAMETGVRIFNIEPLMEKGH) and 185-225 (AHQS…QLVE). The L/FRRG motif signature appears at 226–229 (LRRG). One copy of the WD 3 repeat lies at 230–269 (TDPATLYCINFSHDSSFLCSSSDKGTVHIFALKDTKLNRR).

It belongs to the WD repeat PROPPIN family.

It is found in the preautophagosomal structure. Component of the autophagy machinery that controls the major intracellular degradation process by which cytoplasmic materials are packaged into autophagosomes and delivered to lysosomes for degradation. Binds phosphatidylinositol 3-phosphate (PtdIns3P). The polypeptide is WD repeat domain phosphoinositide-interacting protein 4 (wdr45) (Xenopus laevis (African clawed frog)).